A 194-amino-acid chain; its full sequence is Adenylate kinase isoenzyme 1 (194 aa).

Residue Met1 is modified to N-acetylmethionine. Position 18–23 (18–23 (GSGKGT)) interacts with ATP. The residue at position 38 (Ser38) is a Phosphoserine. The segment at 38-67 (STGDLLRAEVSSGSARGKKLSEIMEKGQLV) is NMP. Residues Thr39, Arg44, 65–67 (QLV), 94–97 (GYPR), and Gln101 each bind AMP. Positions 131-141 (KRGETSGRVDD) are LID. Arg132 provides a ligand contact to ATP. AMP contacts are provided by Arg138 and Arg149. Gly177 contacts ATP.

This sequence belongs to the adenylate kinase family. AK1 subfamily. As to quaternary structure, monomer. Requires Mg(2+) as cofactor.

It is found in the cytoplasm. The catalysed reaction is a ribonucleoside 5'-phosphate + ATP = a ribonucleoside 5'-diphosphate + ADP. It carries out the reaction AMP + ATP = 2 ADP. The enzyme catalyses dAMP + ATP = dADP + ADP. It catalyses the reaction dATP + AMP = dADP + ADP. The catalysed reaction is dAMP + dATP = 2 dADP. It carries out the reaction a 2'-deoxyribonucleoside 5'-diphosphate + ATP = a 2'-deoxyribonucleoside 5'-triphosphate + ADP. The enzyme catalyses a ribonucleoside 5'-diphosphate + ATP = a ribonucleoside 5'-triphosphate + ADP. It catalyses the reaction CDP + GTP = CTP + GDP. The catalysed reaction is GDP + ATP = GTP + ADP. It carries out the reaction UDP + ATP = UTP + ADP. The enzyme catalyses GTP + UDP = UTP + GDP. It catalyses the reaction dTDP + GTP = dTTP + GDP. The catalysed reaction is dCDP + GTP = dCTP + GDP. It carries out the reaction dGDP + ATP = dGTP + ADP. The enzyme catalyses dADP + GTP = dATP + GDP. It catalyses the reaction thiamine diphosphate + ADP = thiamine triphosphate + AMP. Its function is as follows. Catalyzes the reversible transfer of the terminal phosphate group between ATP and AMP. Also displays broad nucleoside diphosphate kinase activity. Plays an important role in cellular energy homeostasis and in adenine nucleotide metabolism. Also catalyzes at a very low rate the synthesis of thiamine triphosphate (ThTP) from thiamine diphosphate (ThDP) and ADP. This is Adenylate kinase isoenzyme 1 from Oryctolagus cuniculus (Rabbit).